Consider the following 104-residue polypeptide: Type IV secretion system protein PtlB homolog (104 aa).

A helical transmembrane segment spans residues 30–50 (IALLGIWFSIAFLALFPVALL).

The protein belongs to the virB3 family.

It is found in the cell membrane. The sequence is that of Type IV secretion system protein PtlB homolog (ptlB) from Bordetella parapertussis (strain 12822 / ATCC BAA-587 / NCTC 13253).